Consider the following 2415-residue polypeptide: Spectrin alpha chain, erythrocytic 1 (2415 aa).

Spectrin repeat units lie at residues 52–152 (YHYQ…SDVL), 157–259 (KFYQ…ESLS), 263–365 (DLQR…AKLK), 370–471 (YHRF…HQYR), 475–576 (DFHL…RKLL), 580–681 (QLLQ…GTQL), 686–787 (QLLQ…KKKL), 792–894 (KLQQ…NDLK), and 898–967 (QLQQ…QQQQ). S257 carries the phosphoserine modification. The region spanning 975-1034 (GREARVIALYDFEARSRREVSMKKNDVLTLLSSINKDWWKVEADDHQGFVPAVYVRKLAP) is the SH3 domain. S990 carries the post-translational modification Phosphoserine. Spectrin repeat units lie at residues 1085–1177 (LAYE…YQLL), 1183–1285 (VEMF…SLNE), 1287–1390 (HKFF…KMLD), 1394–1489 (ELQL…QLLT), 1499–1603 (DLKQ…KLNE), 1606–1709 (RQQR…KLKE), 1712–1815 (ALFQ…NLEE), 1818–1921 (EYLQ…SQLD), 1924–2029 (HAFQ…KLLE), 2040–2142 (LFME…QELQ), and 2154–2254 (MCQE…NLEQ). S1972 is subject to Phosphoserine. 3 consecutive EF-hand domains span residues 2267–2302 (ETLKEFSTTYKHFDENLTGRLTHKEFRSCLRGLNYY), 2310–2345 (EPEPKFEKFLNAVDPGRKGYVSLEDYTSFLIDKESE), and 2347–2382 (IKTSDDIESAFQALAEGKAYITKEDMKQALTPEQVS). D2280, N2282, T2284, R2286, E2291, D2323, Y2329, and D2334 together coordinate Ca(2+).

This sequence belongs to the spectrin family. In terms of assembly, composed of non-homologous chains, alpha and beta, which aggregate to form dimers, tetramers, and higher polymers. Interacts with FASLG. Interacts with BCAM.

Its subcellular location is the cytoplasm. It localises to the cytoskeleton. The protein localises to the cell cortex. Spectrin is the major constituent of the cytoskeletal network underlying the erythrocyte plasma membrane. It associates with band 4.1 and actin to form the cytoskeletal superstructure of the erythrocyte plasma membrane. The polypeptide is Spectrin alpha chain, erythrocytic 1 (Spta1) (Mus musculus (Mouse)).